The sequence spans 472 residues: Argininosuccinate lyase (472 aa).

The protein belongs to the lyase 1 family. Argininosuccinate lyase subfamily.

It localises to the cytoplasm. The enzyme catalyses 2-(N(omega)-L-arginino)succinate = fumarate + L-arginine. Its pathway is amino-acid biosynthesis; L-arginine biosynthesis; L-arginine from L-ornithine and carbamoyl phosphate: step 3/3. This chain is Argininosuccinate lyase, found in Mycobacterium avium (strain 104).